A 521-amino-acid polypeptide reads, in one-letter code: Lysine--tRNA ligase (521 aa).

The 'HIGH' region signature appears at 32–40 (PSGTVHIGN). A 'KMSKS' region motif is present at residues 280-284 (KISSS).

Belongs to the class-I aminoacyl-tRNA synthetase family.

Its subcellular location is the cytoplasm. The enzyme catalyses tRNA(Lys) + L-lysine + ATP = L-lysyl-tRNA(Lys) + AMP + diphosphate. The polypeptide is Lysine--tRNA ligase (lysS) (Borreliella burgdorferi (strain ATCC 35210 / DSM 4680 / CIP 102532 / B31) (Borrelia burgdorferi)).